Here is a 969-residue protein sequence, read N- to C-terminus: MNHEKTNDGNNRPSYKESLNLLKTSFSMRANAIVREPELQQFWKEKGIDFELGLANKGSTFTLHDGPPYANGNLHMGHALNKILKDIINKYQILKGSKVRFVPGWDCHGLPIELQVLKTLDRKEREDLTPIKLRKKAAAYAHKQIALQKDGFRRWGIWADWDNPYLTLQKEYEAAQIKLFGEMAFKGYIYRGLKPVHWSPSSRTALAEAELEYPEGHTSPSIYVAFSVVKLPNLLQESLSKQGLALPVHEDGLSNKLKVAIWTTTPWTLPANMAVAVNENIDYIIAKDNSEKLLIIASDLREIVSEEIGSPLEKVAIVKGKMLDGVLYKHPLFDSLNPFVLGGNYITTESGTGIVHTAPGHGVDDFNTGMKYKLPIICPVDEKGFFTSEAGDFEGLNVLKDANTKIINALKESGCLLKEKPYIHKYPYDWRTKKPTIFRATEQWFASVEGFRNDALNSIEKVEWLPQSGKKRIKSMVEDRGDWCISRQRNWGVPIPVFYSKEGSKVLLNEATIKHIYNLFVKYGADAWWELPISELLPSNYSSEAHKWEKGKDTMDVWFDSGSSWTSVISKSDELNYPADLYLEGSDQHRGWFQSSLLTSVAVNSHAPYLKVLTHGFALDENGRKMSKSLGNIIDPWKIINGGNNKKLEPAYGADVLRLWVSSVDYSVDVPIGNNILSQLSDVYRKVRNTARYLLGNLHDFDPAKDGLDIGDLPILDRWMLNRTADVVDEISIAFERYEFSKFFQLLQSFCVVDLSNFYLDIAKDRLYVSAPNDFRRRSCQYVLSLIVERLAGVISPVLSHTAEDIWQNIPYKLNEESVFQRYWPKVPDSWRDSSFNKPINQIRELRTSVNRALEDCRTRQELGSSLEASVRISPINESLQNSLTFLQENGHNSVDNLFDWLIVSKVQIGGEPWAEVLFTKEDDIGVIEIAKSRGAKCERCWHYELDIGQYERHPLLCGRCVDIIERID.

The 'HIGH' region signature appears at 68–78; it reads PYANGNLHMGH. Glutamate 584 serves as a coordination point for L-isoleucyl-5'-AMP. Residues 625 to 629 carry the 'KMSKS' region motif; sequence KMSKS. An ATP-binding site is contributed by lysine 628. Zn(2+)-binding residues include cysteine 938, cysteine 941, cysteine 958, and cysteine 961.

This sequence belongs to the class-I aminoacyl-tRNA synthetase family. IleS type 1 subfamily. In terms of assembly, monomer. Requires Zn(2+) as cofactor.

The protein resides in the cytoplasm. It catalyses the reaction tRNA(Ile) + L-isoleucine + ATP = L-isoleucyl-tRNA(Ile) + AMP + diphosphate. Its function is as follows. Catalyzes the attachment of isoleucine to tRNA(Ile). As IleRS can inadvertently accommodate and process structurally similar amino acids such as valine, to avoid such errors it has two additional distinct tRNA(Ile)-dependent editing activities. One activity is designated as 'pretransfer' editing and involves the hydrolysis of activated Val-AMP. The other activity is designated 'posttransfer' editing and involves deacylation of mischarged Val-tRNA(Ile). The polypeptide is Isoleucine--tRNA ligase (Prochlorococcus marinus (strain SARG / CCMP1375 / SS120)).